We begin with the raw amino-acid sequence, 353 residues long: Ribosomal RNA small subunit methyltransferase C (353 aa).

This sequence belongs to the methyltransferase superfamily. RsmC family. In terms of assembly, monomer.

It localises to the cytoplasm. It carries out the reaction guanosine(1207) in 16S rRNA + S-adenosyl-L-methionine = N(2)-methylguanosine(1207) in 16S rRNA + S-adenosyl-L-homocysteine + H(+). In terms of biological role, specifically methylates the guanine in position 1207 of 16S rRNA in the 30S particle. This is Ribosomal RNA small subunit methyltransferase C from Marinomonas sp. (strain MWYL1).